Reading from the N-terminus, the 132-residue chain is Small ribosomal subunit protein uS8 (132 aa).

The protein belongs to the universal ribosomal protein uS8 family. As to quaternary structure, part of the 30S ribosomal subunit. Contacts proteins S5 and S12.

Functionally, one of the primary rRNA binding proteins, it binds directly to 16S rRNA central domain where it helps coordinate assembly of the platform of the 30S subunit. This chain is Small ribosomal subunit protein uS8, found in Kocuria rhizophila (strain ATCC 9341 / DSM 348 / NBRC 103217 / DC2201).